The primary structure comprises 304 residues: Endonuclease III-like protein 1 (304 aa).

A mitochondrion-targeting transit peptide spans Met-1 to Arg-22. The disordered stretch occupies residues Met-1–Glu-72. The segment covering Gly-23 to Lys-42 has biased composition (basic and acidic residues). Residues Pro-28–Lys-52 carry the Bipartite nuclear localization signal motif. The span at Ser-43 to Arg-55 shows a compositional bias: basic residues. 2 positions are modified to phosphoserine: Ser-63 and Ser-65. One can recognise a HhH domain in the interval His-191 to His-215. Lys-212 acts as the Nucleophile; for N-glycosylase activity in catalysis. [4Fe-4S] cluster contacts are provided by Cys-282, Cys-289, Cys-292, and Cys-298.

This sequence belongs to the Nth/MutY family. Interacts with YBX1. Interacts with ERCC5/XPG; the interaction stimulates NTHL1 activity and NTHL1 binding to its DNA substrate. [4Fe-4S] cluster serves as cofactor. Post-translationally, ubiquitinated by TRIM26; leading to proteasomal degradation. In terms of tissue distribution, widely expressed with highest levels in heart and lowest levels in lung and liver.

The protein localises to the nucleus. It is found in the mitochondrion. It catalyses the reaction 2'-deoxyribonucleotide-(2'-deoxyribose 5'-phosphate)-2'-deoxyribonucleotide-DNA = a 3'-end 2'-deoxyribonucleotide-(2,3-dehydro-2,3-deoxyribose 5'-phosphate)-DNA + a 5'-end 5'-phospho-2'-deoxyribonucleoside-DNA + H(+). Its activity is regulated as follows. APE1 displaces NTHL1 from the N-glycosylase-generated AP site in DNA, thereby increasing the turnover of the DNA N-glycosylase activity. AP lyase activity is stimulated by YBX1. ERCC5/XPG stimulates NTHL1 activity and NTHL1 binding to its DNA substrate. Functionally, bifunctional DNA N-glycosylase with associated apurinic/apyrimidinic (AP) lyase function that catalyzes the first step in base excision repair (BER), the primary repair pathway for the repair of oxidative DNA damage. The DNA N-glycosylase activity releases the damaged DNA base from DNA by cleaving the N-glycosidic bond, leaving an AP site. The AP-lyase activity cleaves the phosphodiester bond 3' to the AP site by a beta-elimination. Primarily recognizes and repairs oxidative base damage of pyrimidines. Also has 8-oxo-7,8-dihydroguanine (8-oxoG) DNA glycosylase activity. Acts preferentially on DNA damage opposite guanine residues in DNA. Is able to process lesions in nucleosomes without requiring or inducing nucleosome disruption. This is Endonuclease III-like protein 1 from Homo sapiens (Human).